Here is a 320-residue protein sequence, read N- to C-terminus: MIDFRPFYQQIATTNLSAWLETLPLQLKQWEKTTHGDYAKWAKIVDFMPNSTACINLKDKVESIPHTPLSVGETKQLTHHLKQLMPWRKGPYHLHGIHIDTEWRSDFKWDRVLPHLAPLKDRTILDVGCGSGYHMWRMVGEGAKMVVGIDPTELFLCQFEVVRKLLGNDRRANLIPLGIEQMQPLAAFDTVFSMGVLYHRKSPLDHLSQLKAQLVKGGELVLETLVIDGDVNTCLVPADRYAKMKNVYFIPSIDCLINWLEKVGFKNVRCVDQAVTTLEEQRKTDWLENESLVDFLDPNDHSKTIEGYPAPKRAVILANA.

Carboxy-S-adenosyl-L-methionine is bound by residues Lys-89, Trp-103, Lys-108, Gly-128, 150–152 (DPT), 179–180 (IE), Met-194, Tyr-198, and Arg-313.

It belongs to the class I-like SAM-binding methyltransferase superfamily. CmoB family. In terms of assembly, homotetramer.

It carries out the reaction carboxy-S-adenosyl-L-methionine + 5-hydroxyuridine(34) in tRNA = 5-carboxymethoxyuridine(34) in tRNA + S-adenosyl-L-homocysteine + H(+). Catalyzes carboxymethyl transfer from carboxy-S-adenosyl-L-methionine (Cx-SAM) to 5-hydroxyuridine (ho5U) to form 5-carboxymethoxyuridine (cmo5U) at position 34 in tRNAs. This chain is tRNA U34 carboxymethyltransferase, found in Actinobacillus pleuropneumoniae serotype 3 (strain JL03).